The following is a 328-amino-acid chain: MAFKEVVRVAVTGGKGQIAYNFLFALAHGDVFGVDRGVDLRIYDVPGTERALSGVRMELDDGAYPLLHRLRVTTSLNDAFDGIDAAFLIGAVPRGPGMERGDLLKQNGQIFSLQGAALNTAAKRDAKIFVVGNPVNTNCWIAMKHAPRLHRKNFHAMLRLDQNRMHSMLAHRAEVPLEEVSRVVIWGNHSAKQVPDFTQARISGKPAAEVIGDRDWLENILVHSVQNRGSAVIEARGKSSAASASRALAEAARSIFCPKSDEWFSSGVCSDHNPYGIPEDLIFGFPCRMLPSGDYEIIPGLPWEPFIRNKIQISLDEIAQEKASVSSL.

13 to 19 (GGKGQIA) lines the NAD(+) pocket. Residues Arg-94 and Arg-100 each coordinate substrate. NAD(+) is bound by residues Asn-107, Gln-114, and 131–133 (VGN). Substrate contacts are provided by Asn-133 and Arg-164. The active-site Proton acceptor is the His-189.

Belongs to the LDH/MDH superfamily. MDH type 2 family.

The enzyme catalyses (S)-malate + NAD(+) = oxaloacetate + NADH + H(+). Functionally, catalyzes the reversible oxidation of malate to oxaloacetate. The sequence is that of Malate dehydrogenase from Chlamydia pneumoniae (Chlamydophila pneumoniae).